Consider the following 337-residue polypeptide: Tetraacyldisaccharide 4'-kinase (337 aa).

Residue 56–63 (VAGGAGKT) participates in ATP binding.

It belongs to the LpxK family.

The catalysed reaction is a lipid A disaccharide + ATP = a lipid IVA + ADP + H(+). It functions in the pathway glycolipid biosynthesis; lipid IV(A) biosynthesis; lipid IV(A) from (3R)-3-hydroxytetradecanoyl-[acyl-carrier-protein] and UDP-N-acetyl-alpha-D-glucosamine: step 6/6. Transfers the gamma-phosphate of ATP to the 4'-position of a tetraacyldisaccharide 1-phosphate intermediate (termed DS-1-P) to form tetraacyldisaccharide 1,4'-bis-phosphate (lipid IVA). This chain is Tetraacyldisaccharide 4'-kinase, found in Rhodospirillum centenum (strain ATCC 51521 / SW).